The chain runs to 560 residues: MHDNMSTMVYMKEEKLEKLTQDEIISKTKQVIQGLEALKNEHNSILQSLLETLKCLKKDDESNLVEEKSSMIRKSLEMLELGLSEAQVMMALSNHLNAVESEKQKLRAQVRRLCQENQWLRDELANTQQKLQKSEQSVAQLEEEKKHLEFMNQLKKYDDDISPSEDKDSDSSKEPLDDLFPNDEDDPGQGIQQQHSSAAAAAQQGGYEIPARLRTLHNLVIQYASQGRYEVAVPLCKQALEDLEKTSGHDHPDVATMLNILALVYRDQNKYKDAANLLNDALAIREKTLGRDHPAVAATLNNLAVLYGKRGKYKEAEPLCKRALEIREKVLGKDHPDVAKQLNNLALLCQNQGKYEEVEYYYQRALEIYQTKLGPDDPNVAKTKNNLASCYLKQGKFKQAETLYKEILTRAHEREFGSVDDENKPIWMHAEEREECKGKQKDGSSFGEYGGWYKACKVDSPTVTTTLKNLGALYRRQGKFEAAETLEEAALRSRKQGLDNVHKQRVAEVLNDPENVEKRRSRESLNVDVVKYESGPDGGEEVSMSVEWNGMRKMKLGLVK.

Positions 27 to 156 (KTKQVIQGLE…HLEFMNQLKK (130 aa)) form a coiled coil. Basic and acidic residues predominate over residues 156-176 (KYDDDISPSEDKDSDSSKEPL). The disordered stretch occupies residues 156–203 (KYDDDISPSEDKDSDSSKEPLDDLFPNDEDDPGQGIQQQHSSAAAAAQ). A Phosphoserine modification is found at Ser-162. Low complexity predominate over residues 188–203 (GQGIQQQHSSAAAAAQ). TPR repeat units lie at residues 213-246 (LRTLHNLVIQYASQGRYEVAVPLCKQALEDLEKT), 255-288 (ATMLNILALVYRDQNKYKDAANLLNDALAIREKT), 297-330 (AATLNNLAVLYGKRGKYKEAEPLCKRALEIREKV), 339-372 (AKQLNNLALLCQNQGKYEEVEYYYQRALEIYQTK), and 381-414 (AKTKNNLASCYLKQGKFKQAETLYKEILTRAHER). Tyr-449 bears the Phosphotyrosine mark. Ser-460 carries the phosphoserine modification. The stretch at 464-497 (TTTLKNLGALYRRQGKFEAAETLEEAALRSRKQG) is one TPR 6 repeat. A phosphoserine mark is found at Ser-521 and Ser-524.

This sequence belongs to the kinesin light chain family. In terms of assembly, oligomeric complex composed of two heavy chains and two light chains. Interacts with SPAG9. Interacts with ATCAY; may link mitochondria to KLC1 and regulate mitochondria localization into neuron projections. Interacts (via TPR repeats) with TOR1A; the interaction associates TOR1A with the kinesin oligomeric complex. Interacts with BORCS5. Interacts with MAPK8IP3/JIP3 and NTRK2/TRKB; interaction with NTRK2/TRKB is mediated by MAPK8IP3/JIP3. Interacts with CLSTN1; phosphorylation at Ser-460 inhibits interaction with CLSTN1. In terms of processing, phosphorylation at Ser-460 by ERK inhibits interaction with CLSTN1 and localization to cytoplasmic vesicles. In terms of tissue distribution, expressed in brain (at protein level).

Its subcellular location is the cell projection. It localises to the growth cone. The protein localises to the cytoplasmic vesicle. The protein resides in the cytoplasm. It is found in the cytoskeleton. Kinesin is a microtubule-associated force-producing protein that may play a role in organelle transport. The light chain may function in coupling of cargo to the heavy chain or in the modulation of its ATPase activity. This is Kinesin light chain 1 (Klc1) from Rattus norvegicus (Rat).